The primary structure comprises 79 residues: Short neurotoxin 2 (79 aa).

A signal peptide spans Pro-1 to Thr-19. Intrachain disulfides connect Cys-22-Cys-41, Cys-36-Cys-58, Cys-60-Cys-71, and Cys-72-Cys-77.

The protein belongs to the three-finger toxin family. Short-chain subfamily. Type I alpha-neurotoxin sub-subfamily. As to expression, expressed by the venom gland.

The protein localises to the secreted. Binds to muscle nicotinic acetylcholine receptor (nAChR) and inhibit acetylcholine from binding to the receptor, thereby impairing neuromuscular transmission. The polypeptide is Short neurotoxin 2 (Hydrophis cyanocinctus (Asian annulated sea snake)).